The primary structure comprises 320 residues: 2-oxoglutarate-dependent dioxygenase thnC (320 aa).

The region spanning Pro-174–Asp-278 is the Fe2OG dioxygenase domain. Residues His-199, Asp-201, and His-258 each coordinate Fe cation. Arg-268 provides a ligand contact to 2-oxoglutarate.

It belongs to the iron/ascorbate-dependent oxidoreductase family. Fe(2+) is required as a cofactor.

The catalysed reaction is trihazone A + 2-oxoglutarate + O2 + H(+) = trihazone D + succinate + 2 CO2 + H2O. The protein operates within secondary metabolite biosynthesis. Its function is as follows. 2-oxoglutarate-dependent dioxygenase; part of the gene cluster that produces the tetronate natural products trihazones. ThnC catalyzes the oxidative decarboxylation of trihazone A to trihazone D. The C4 hydrogen is first abstracted by the iron-oxo species generated in ThnC to give a tertiary radical at C4. This is followed by decarboxylation and removal of the second electron by the FeIII-OH center to give trihazone D. The pathway begins with the formation of trihazone A by the hybrid PKS-NRPS synthetase thnA and the trans-enoyl reductase thnE. Trihazone A is further decarboxylated by the 2-oxoglutarate-dependent dioxygenase thnC to produce trihazone D. The function of the FAD-dependent monooxygenase thnD has still to be identified. This Trichoderma harzianum (Hypocrea lixii) protein is 2-oxoglutarate-dependent dioxygenase thnC.